Reading from the N-terminus, the 194-residue chain is Phosphoheptose isomerase (194 aa).

Positions 37–194 (ISNSFKQGGK…LIEFEMAKQA (158 aa)) constitute an SIS domain. 52-54 (NGG) is a binding site for substrate. Zn(2+) is bound by residues His61 and Glu65. Residues Glu65, 93–94 (ND), 119–121 (STS), Ser124, and Gln172 contribute to the substrate site. Zn(2+)-binding residues include Gln172 and His180.

The protein belongs to the SIS family. GmhA subfamily. As to quaternary structure, homotetramer. Requires Zn(2+) as cofactor.

It is found in the cytoplasm. The catalysed reaction is 2 D-sedoheptulose 7-phosphate = D-glycero-alpha-D-manno-heptose 7-phosphate + D-glycero-beta-D-manno-heptose 7-phosphate. It functions in the pathway carbohydrate biosynthesis; D-glycero-D-manno-heptose 7-phosphate biosynthesis; D-glycero-alpha-D-manno-heptose 7-phosphate and D-glycero-beta-D-manno-heptose 7-phosphate from sedoheptulose 7-phosphate: step 1/1. Catalyzes the isomerization of sedoheptulose 7-phosphate in D-glycero-D-manno-heptose 7-phosphate. The chain is Phosphoheptose isomerase from Actinobacillus pleuropneumoniae serotype 5b (strain L20).